A 94-amino-acid polypeptide reads, in one-letter code: Putative testis-specific prion protein (94 aa).

The N-terminal stretch at 1 to 18 (MQHSLVFFFAVILHLSHL) is a signal peptide. The N-linked (GlcNAc...) asparagine glycan is linked to Asn44.

As to expression, specifically expressed in adult testis.

Its subcellular location is the secreted. In Homo sapiens (Human), this protein is Putative testis-specific prion protein (PRNT).